We begin with the raw amino-acid sequence, 410 residues long: Cytohesin-2 (410 aa).

A coiled-coil region spans residues 13-56 (PEERMELENIRRRKQELLVEIQRLREELSEAMSEVEGLEANEGS). Residues 54 to 241 (EGSKTLQRNR…RNLYDSIRNE (188 aa)) form the SEC7 domain. The region spanning 259–386 (NPDREGWLLK…WIKSIQAAVS (128 aa)) is the PH domain. Residues 268-271 (KLGA), Arg-290, Tyr-301, Arg-311, Lys-349, Asn-360, and His-361 contribute to the a 1,2-diacyl-sn-glycero-3-phospho-(1D-myo-inositol-3,4,5-trisphosphate) site. Residues 397–405 (RKKRISVKK) form a C-terminal autoinhibitory region region.

In terms of assembly, heteromer. Composed of TAMALIN, CYTH2 and at least one GRM1. Interacts with ARRB1. Interacts with ARL4D; the interaction is direct. Directly interacts with CCDC120 through the coiled coil domain; this interaction stabilizes CCDC120, possibly by preventing its ubiquitination, and is required for neurite growth in neuroblastoma cells. Interacts (via N-terminal domain) with INAVA (via N-terminal domain).

Its subcellular location is the cell membrane. It localises to the cytoplasm. The protein localises to the cell projection. The protein resides in the growth cone. Functionally, acts as a guanine-nucleotide exchange factor (GEF). Promotes guanine-nucleotide exchange on ARF1, ARF3 and ARF6. Promotes the activation of ARF factors through replacement of GDP with GTP. The cell membrane form, in association with ARL4 proteins, recruits ARF6 to the plasma membrane. Involved in neurite growth. The chain is Cytohesin-2 (CYTH2) from Bos taurus (Bovine).